Consider the following 1041-residue polypeptide: FHIP family protein GF15501 (1041 aa).

Disordered stretches follow at residues 797-856 and 907-987; these read RKGN…NKRR and SNSS…SEPV. Serine 803 bears the Phosphoserine mark. A compositionally biased stretch (low complexity) spans 808-824; sequence NLQQQQALNPAQQQGQQ. Polar residues-rich tracts occupy residues 825 to 843 and 907 to 933; these read RSAYATLSAATPVQATPTS and SNSSSESRGFAPGQQSAGTCETSLSTQ. The span at 942–973 shows a compositional bias: low complexity; it reads SGSSSNSSMGGSSQTLSAHSNATTTHSSSTLH.

The protein belongs to the FHIP family.

The chain is FHIP family protein GF15501 from Drosophila ananassae (Fruit fly).